The sequence spans 168 residues: uncharacterized protein (168 aa).

The N-acetyltransferase domain occupies E7–M168.

This is an uncharacterized protein from Azospirillum brasilense.